The primary structure comprises 212 residues: N-(5'-phosphoribosyl)anthranilate isomerase (212 aa).

It belongs to the TrpF family.

The enzyme catalyses N-(5-phospho-beta-D-ribosyl)anthranilate = 1-(2-carboxyphenylamino)-1-deoxy-D-ribulose 5-phosphate. Its pathway is amino-acid biosynthesis; L-tryptophan biosynthesis; L-tryptophan from chorismate: step 3/5. The protein is N-(5'-phosphoribosyl)anthranilate isomerase of Cereibacter sphaeroides (strain ATCC 17029 / ATH 2.4.9) (Rhodobacter sphaeroides).